The primary structure comprises 637 residues: Nuclear receptor subfamily 2 group C member 1-A (637 aa).

The segment at residues 149–224 (VELCVVCGDK…LGMKQDSVQC (76 aa)) is a DNA-binding region (nuclear receptor). 2 NR C4-type zinc fingers span residues 152–172 (CVVC…CEGC) and 188–207 (CRGS…CQYC). The NR LBD domain maps to 383–624 (CLGSNANLLH…SIIPYILRME (242 aa)).

Belongs to the nuclear hormone receptor family. NR2 subfamily.

It is found in the nucleus. Its function is as follows. Orphan nuclear receptor. Binds the IR7 element in the promoter of its own gene in an autoregulatory negative feedback mechanism. Primarily repressor of a broad range of genes. Binds to hormone response elements (HREs) consisting of two 5'-AGGTCA-3' half site direct repeat consensus sequences. This Xenopus laevis (African clawed frog) protein is Nuclear receptor subfamily 2 group C member 1-A (nr2c1-a).